Consider the following 917-residue polypeptide: Probable dipeptidyl-aminopeptidase B (917 aa).

Positions 1-78 (MGVEKRINDE…EGDLEEGFVP (78 aa)) are disordered. Topologically, residues 1 to 90 (MGVEKRINDE…GGWSAPRKVS (90 aa)) are cytoplasmic. The span at 16-26 (AERDDKSRDSI) shows a compositional bias: basic and acidic residues. A compositionally biased stretch (low complexity) spans 27–49 (DSTSTASISLALLGGANGSAHGS). Residues 55–65 (RKSENQEKYHD) show a composition bias toward basic and acidic residues. A helical; Signal-anchor for type II membrane protein transmembrane segment spans residues 91 to 111 (VIFTLIVTLCIAGWLVAFFVL). Over 112 to 917 (LGRHKDSSKD…LGLINILRNG (806 aa)) the chain is Vacuolar. Asparagine 350 and asparagine 465 each carry an N-linked (GlcNAc...) asparagine glycan. Residue serine 754 is the Charge relay system of the active site. Asparagine 813 carries N-linked (GlcNAc...) asparagine glycosylation. Catalysis depends on charge relay system residues aspartate 831 and histidine 864.

This sequence belongs to the peptidase S9B family.

Its subcellular location is the vacuole membrane. It catalyses the reaction Release of an N-terminal dipeptide, Xaa-Yaa-|-Zaa-, from a polypeptide, preferentially when Yaa is Pro, provided Zaa is neither Pro nor hydroxyproline.. Its function is as follows. Type IV dipeptidyl-peptidase which removes N-terminal dipeptides sequentially from polypeptides having unsubstituted N-termini provided that the penultimate residue is proline. This chain is Probable dipeptidyl-aminopeptidase B (DAPB), found in Coccidioides posadasii (strain C735) (Valley fever fungus).